The following is a 132-amino-acid chain: Small ribosomal subunit protein uS8 (132 aa).

This sequence belongs to the universal ribosomal protein uS8 family. As to quaternary structure, part of the 30S ribosomal subunit. Contacts proteins S5 and S12.

Functionally, one of the primary rRNA binding proteins, it binds directly to 16S rRNA central domain where it helps coordinate assembly of the platform of the 30S subunit. The chain is Small ribosomal subunit protein uS8 from Lysinibacillus sphaericus (strain C3-41).